Here is a 355-residue protein sequence, read N- to C-terminus: Nematocyst expressed protein 3 (355 aa).

An N-terminal signal peptide occupies residues 1–18; the sequence is MKLTYILLIAVVGVAIEA. 3 consecutive ShKT domains span residues 50-89, 107-134, and 140-182; these read CKDV…CKLC, QPQQ…CQLC, and SGPV…CNTY. 6 disulfide bridges follow: C50-C89, C57-C82, C71-C86, C116-C131, C149-C175, and C158-C179. Positions 92–355 are excised as a propeptide; that stretch reads KRSKKQSDYM…KKSKSHKKQH (264 aa). The interval 202-355 is disordered; sequence YQPNAMPTPP…KKSKSHKKQH (154 aa). The span at 207 to 221 shows a compositional bias: pro residues; sequence MPTPPQGVTPAPLPP. 3 stretches are compositionally biased toward low complexity: residues 222-232, 240-270, and 277-332; these read YFQQQGYGYPQ, VQPG…TTTE, and TEAA…AQSD. A compositionally biased stretch (basic residues) spans 335 to 355; sequence NKKKHKKDKAQKKSKSHKKQH.

The protein belongs to the NEP3 family. As to expression, nematocytes. In late planulae, transcripts are found throughout the ectoderm in nematocytes, with high concentration of expressing cells in the oral pole. In primary polyps, is expressed in nematocytes in the body wall and physa ectoderm and in the upper and lower pharynx.

Its subcellular location is the nematocyst. It is found in the secreted. In terms of biological role, neurotoxin. In vivo, induces pronounced contraction and tail twitching on zebrafish larvae, as well as death 5 hours later. This is Nematocyst expressed protein 3 from Nematostella vectensis (Starlet sea anemone).